An 838-amino-acid chain; its full sequence is Outer membrane usher protein YraJ (838 aa).

The first 40 residues, 1 to 40 (MPQRHHQGHKRTPKQLALIIKRCLPMVLTGSGMLCTTANA), serve as a signal peptide directing secretion. Residues Cys-815 and Cys-837 are joined by a disulfide bond.

The protein belongs to the fimbrial export usher family.

The protein resides in the cell outer membrane. Its function is as follows. Part of the yraHIJK fimbrial operon. Could contribute to adhesion to various surfaces in specific environmental niches. Increases adhesion to eukaryotic T24 bladder epithelial cells in the absence of fim operon. Probably involved in the export and assembly of fimbrial subunits across the outer membrane. This chain is Outer membrane usher protein YraJ (yraJ), found in Escherichia coli (strain K12).